Consider the following 362-residue polypeptide: Protein U8 (362 aa).

This sequence belongs to the herpesviridae US22 family.

The chain is Protein U8 (U8) from Human herpesvirus 7 (strain JI) (HHV-7).